The chain runs to 370 residues: Chorismate synthase (370 aa).

Residue R48 coordinates NADP(+). Residues 125 to 127, 241 to 242, G286, 301 to 305, and R327 contribute to the FMN site; these read RSS, NA, and KPTSS.

It belongs to the chorismate synthase family. Homotetramer. FMNH2 is required as a cofactor.

It catalyses the reaction 5-O-(1-carboxyvinyl)-3-phosphoshikimate = chorismate + phosphate. It functions in the pathway metabolic intermediate biosynthesis; chorismate biosynthesis; chorismate from D-erythrose 4-phosphate and phosphoenolpyruvate: step 7/7. Catalyzes the anti-1,4-elimination of the C-3 phosphate and the C-6 proR hydrogen from 5-enolpyruvylshikimate-3-phosphate (EPSP) to yield chorismate, which is the branch point compound that serves as the starting substrate for the three terminal pathways of aromatic amino acid biosynthesis. This reaction introduces a second double bond into the aromatic ring system. The chain is Chorismate synthase from Ruegeria sp. (strain TM1040) (Silicibacter sp.).